The following is a 577-amino-acid chain: Arginine--tRNA ligase (577 aa).

The 'HIGH' region motif lies at 122–132 (PNVAKEMHVGH).

It belongs to the class-I aminoacyl-tRNA synthetase family. Monomer.

The protein resides in the cytoplasm. It carries out the reaction tRNA(Arg) + L-arginine + ATP = L-arginyl-tRNA(Arg) + AMP + diphosphate. This is Arginine--tRNA ligase from Haemophilus influenzae (strain 86-028NP).